The following is a 91-amino-acid chain: Lipolysis-activating peptide 1-alpha chain (91 aa).

A signal peptide spans 1-21 (MNIKLFCFLSILISLTGLSLS). In terms of domain architecture, LCN-type CS-alpha/beta spans 23–87 (DDGNYPIDAN…FFDAYKTYCK (65 aa)). 3 disulfides stabilise this stretch: Cys-38–Cys-61, Cys-47–Cys-66, and Cys-51–Cys-68.

This sequence belongs to the long (3 C-C) scorpion toxin superfamily. As to quaternary structure, heterodimer of this alpha chain and a beta chain (AC D9U2A2). In terms of tissue distribution, expressed by the venom gland.

Its subcellular location is the secreted. Its function is as follows. The heterodimer LVP1 induces lipolysis in rat adipocytes. Induction of lipolysis by LVP1 appears to be mediated through the beta-2 adrenergic receptor pathway (ADRB2). The chain is Lipolysis-activating peptide 1-alpha chain from Lychas mucronatus (Chinese swimming scorpion).